Here is a 543-residue protein sequence, read N- to C-terminus: MFS-type transporter pyvG (543 aa).

The interval 24 to 71 (PPTEQQPGFQLPPPYRLAATRTQPQQQQEQEQEQEQAKPATRPPWNEP) is disordered. The N-linked (GlcNAc...) asparagine glycan is linked to Asn-94. Transmembrane regions (helical) follow at residues 101-121 (LLVYLEVNLITFMVYMSVAIF), 141-161 (LGMSLYVLGYGTGPMIWSPLS), 178-198 (IFLLLSIPTAVVNNVPGFLIL), 203-223 (GFFGSPGLATGGASIADVTGL), 230-250 (LYVWAVCSIAGPAVAPVIAGF), 259-279 (WSMWEVLWAAGGCFVFLLFLP), 335-355 (PAILFTTVYIGLVYAIFYSYF), 374-394 (GLIFLGAIVGTLLVLPGYFAF), 415-435 (LVPALCGSVLVPVGLFLFAWT), 440-460 (LHWVVPTVGLVLEVAGMSLVI), 476-496 (ASLFAINDLARAYLAFAAIMW), and 512-532 (LLAGLTVGCVGGMFTLYWWGP).

This sequence belongs to the major facilitator superfamily. CAR1 family.

The protein localises to the cell membrane. In terms of biological role, MFS-type transporter; part of the gene cluster that mediates the biosynthesis of pyranoviolin A, a pyranonigrin analog with a C-3 methoxy group. May be involved in the secretion of pyranoviolin A. In Aspergillus violaceofuscus (strain CBS 115571), this protein is MFS-type transporter pyvG.